The sequence spans 140 residues: Lysozyme B (140 aa).

The signal sequence occupies residues Met1–Gly18. In terms of domain architecture, C-type lysozyme spans Arg19–Phe140. 4 cysteine pairs are disulfide-bonded: Cys24–Cys139, Cys45–Cys129, Cys80–Cys96, and Cys92–Cys110. Active-site residues include Glu50 and Asp68.

Belongs to the glycosyl hydrolase 22 family. In terms of tissue distribution, found in the midgut.

It carries out the reaction Hydrolysis of (1-&gt;4)-beta-linkages between N-acetylmuramic acid and N-acetyl-D-glucosamine residues in a peptidoglycan and between N-acetyl-D-glucosamine residues in chitodextrins.. Functionally, unlikely to play an active role in the humoral immune defense. May have a function in the digestion of bacteria in the food. This chain is Lysozyme B (LysB), found in Drosophila melanogaster (Fruit fly).